Here is a 444-residue protein sequence, read N- to C-terminus: Tol-Pal system protein TolB (444 aa).

Residues 1–19 (MRNIIYFILLLLFSFKGYA) form the signal peptide.

The protein belongs to the TolB family. In terms of assembly, the Tol-Pal system is composed of five core proteins: the inner membrane proteins TolA, TolQ and TolR, the periplasmic protein TolB and the outer membrane protein Pal. They form a network linking the inner and outer membranes and the peptidoglycan layer.

It is found in the periplasm. Functionally, part of the Tol-Pal system, which plays a role in outer membrane invagination during cell division and is important for maintaining outer membrane integrity. The polypeptide is Tol-Pal system protein TolB (Rickettsia akari (strain Hartford)).